The sequence spans 209 residues: MKLVLLERVENLGVIGDVVSVRPGFARNFLLPQGKALRATEANMARFEVERELLEKRNAERAAEAAESGKTIDGESFVMIRQAGESGQLYGSVTSRDIAEIVSESGTKVVRSQIALNAPIKTLGLHELKIKLHADVSVTVTINIARSQDEAERQAAGEDVIAAQADEDRAIADAQAAELFEASEEGQELAAQREATEDAGADESEETEA.

The disordered stretch occupies residues 181-209 (EASEEGQELAAQREATEDAGADESEETEA). A compositionally biased stretch (acidic residues) spans 197–209 (EDAGADESEETEA).

This sequence belongs to the bacterial ribosomal protein bL9 family.

In terms of biological role, binds to the 23S rRNA. In Maricaulis maris (strain MCS10) (Caulobacter maris), this protein is Large ribosomal subunit protein bL9.